The following is a 364-amino-acid chain: Phosphoserine aminotransferase (364 aa).

An L-glutamate-binding site is contributed by R40. Residues 74–75, W100, T149, D170, and Q193 each bind pyridoxal 5'-phosphate; that span reads GT. K194 is subject to N6-(pyridoxal phosphate)lysine. 235-236 is a pyridoxal 5'-phosphate binding site; sequence NT.

The protein belongs to the class-V pyridoxal-phosphate-dependent aminotransferase family. SerC subfamily. Homodimer. Pyridoxal 5'-phosphate serves as cofactor. Expressed in ovary and head.

The catalysed reaction is O-phospho-L-serine + 2-oxoglutarate = 3-phosphooxypyruvate + L-glutamate. It catalyses the reaction 4-(phosphooxy)-L-threonine + 2-oxoglutarate = (R)-3-hydroxy-2-oxo-4-phosphooxybutanoate + L-glutamate. It functions in the pathway amino-acid biosynthesis; L-serine biosynthesis; L-serine from 3-phospho-D-glycerate: step 2/3. Its pathway is cofactor biosynthesis; pyridoxine 5'-phosphate biosynthesis; pyridoxine 5'-phosphate from D-erythrose 4-phosphate: step 3/5. Its function is as follows. Catalyzes the reversible conversion of 3-phosphohydroxypyruvate to phosphoserine and of 3-hydroxy-2-oxo-4-phosphonooxybutanoate to phosphohydroxythreonine. This is Phosphoserine aminotransferase from Drosophila melanogaster (Fruit fly).